The primary structure comprises 506 residues: Lysine--tRNA ligase (506 aa).

The Mg(2+) site is built by glutamate 416 and glutamate 423.

The protein belongs to the class-II aminoacyl-tRNA synthetase family. Homodimer. Mg(2+) is required as a cofactor.

It is found in the cytoplasm. It carries out the reaction tRNA(Lys) + L-lysine + ATP = L-lysyl-tRNA(Lys) + AMP + diphosphate. The chain is Lysine--tRNA ligase (lysS) from Xylella fastidiosa (strain 9a5c).